We begin with the raw amino-acid sequence, 97 residues long: Citrate lyase acyl carrier protein (97 aa).

Serine 14 carries the O-(phosphoribosyl dephospho-coenzyme A)serine modification.

The protein belongs to the CitD family. In terms of assembly, oligomer with a subunit composition of (alpha,beta,gamma)6.

The protein localises to the cytoplasm. Functionally, covalent carrier of the coenzyme of citrate lyase. This is Citrate lyase acyl carrier protein from Yersinia enterocolitica serotype O:8 / biotype 1B (strain NCTC 13174 / 8081).